Reading from the N-terminus, the 146-residue chain is Large ribosomal subunit protein uL15 (146 aa).

The tract at residues 1 to 58 (MNLSNLRAPKKANRNRKRVGRGMGSGHGKTSTRGHKGQRSRSGSRSMRGFEGGQMPLH) is disordered. Basic residues-rich tracts occupy residues 8–20 (APKK…KRVG) and 30–39 (TSTRGHKGQR). A compositionally biased stretch (low complexity) spans 40–49 (SRSGSRSMRG).

The protein belongs to the universal ribosomal protein uL15 family. Part of the 50S ribosomal subunit.

Binds to the 23S rRNA. This is Large ribosomal subunit protein uL15 from Acidobacterium capsulatum (strain ATCC 51196 / DSM 11244 / BCRC 80197 / JCM 7670 / NBRC 15755 / NCIMB 13165 / 161).